The primary structure comprises 91 residues: Small ribosomal subunit protein uS17 (91 aa).

This sequence belongs to the universal ribosomal protein uS17 family. In terms of assembly, part of the 30S ribosomal subunit.

Its function is as follows. One of the primary rRNA binding proteins, it binds specifically to the 5'-end of 16S ribosomal RNA. This Salinispora tropica (strain ATCC BAA-916 / DSM 44818 / JCM 13857 / NBRC 105044 / CNB-440) protein is Small ribosomal subunit protein uS17.